The primary structure comprises 240 residues: tRNA (guanine-N(1)-)-methyltransferase (240 aa).

S-adenosyl-L-methionine-binding positions include glycine 110 and 130 to 135 (VGDYVL).

Belongs to the RNA methyltransferase TrmD family. In terms of assembly, homodimer.

The protein localises to the cytoplasm. It catalyses the reaction guanosine(37) in tRNA + S-adenosyl-L-methionine = N(1)-methylguanosine(37) in tRNA + S-adenosyl-L-homocysteine + H(+). In terms of biological role, specifically methylates guanosine-37 in various tRNAs. This chain is tRNA (guanine-N(1)-)-methyltransferase, found in Borrelia recurrentis (strain A1).